A 452-amino-acid chain; its full sequence is MFATSGAVAAGKPYSCSECGKSFCYSSVLLRHERAHGGDGRFRCLECGERCARAADLRAHRRTHAGQTLYICSECGQSFRHSGRLDLHLGAHRQRCRTCPCRTCGRRFPHLPALLLHRRRQHLPERPRRCPLCARTFRQSALLFHQARAHPLGTTSDPAAPPHRCAQCPRAFRSGAGLRSHARIHVSRSPTRPRVSDAHQCGVCGKCFGKSSTLTRHLQTHSGEKPFKCPECGKGFLESATLVRHQRTHTGEKPYACGDCGRCFSESSTLLRHRRSHQGERPHACATCGKGFGQRSDLVVHQRIHTGEKPFACPECGRRFSDRSDLTKHRRTHTGEKPYRCELCGKRFTCVSNLNVHRRNHAGHKPHKCPECSKAFSVASKLALHRKTHLGERPAECAECGKCFSHSRSLSQHQRAHTRARTAAAVAIQSAVGTALVFEGPAEQEKPGFSVS.

C2H2-type zinc fingers lie at residues Y14 to H36, F42 to H64, Y70 to H92, and C99 to H122. A C2H2-type 5; degenerate zinc finger spans residues R128–H150. C2H2-type zinc fingers lie at residues H163–H185, H199–H221, F227–H249, Y255–H277, H283–H305, F311–H333, Y339–H361, H367–H389, and A395–H417.

Belongs to the krueppel C2H2-type zinc-finger protein family.

Its subcellular location is the nucleus. May be involved in transcriptional regulation. In Homo sapiens (Human), this protein is Zinc finger protein 672.